Consider the following 298-residue polypeptide: MAGQLREYRRRIRSVQSTKKITRAMELIAASRIAKARARVAAARPYAEEITRVIEAVAAQTTIDHPLTTERPGAARAAVVVITSDRGLAGGYSSNALRRTGELIELLHSEGKETDLHVVGRKGTGYYRFRGRAMSGEYTGFSEQPSYADAKSVADALIAAFIATSENGGVDEIHVVHTEYVSAITQTPVARRLLPMVLTETDEPPRGGPLPQYEFEPSAEGVLDALLPRYVESRLYAALLESAASESAARQRAMKSATDNAEDLIKRYTRQANRARQDAITQEISEIVGGANALASGT.

Belongs to the ATPase gamma chain family. In terms of assembly, F-type ATPases have 2 components, CF(1) - the catalytic core - and CF(0) - the membrane proton channel. CF(1) has five subunits: alpha(3), beta(3), gamma(1), delta(1), epsilon(1). CF(0) has three main subunits: a, b and c.

The protein localises to the cell membrane. Produces ATP from ADP in the presence of a proton gradient across the membrane. The gamma chain is believed to be important in regulating ATPase activity and the flow of protons through the CF(0) complex. The sequence is that of ATP synthase gamma chain from Frankia casuarinae (strain DSM 45818 / CECT 9043 / HFP020203 / CcI3).